The chain runs to 609 residues: Replication protein A 70 kDa DNA-binding subunit (609 aa).

The interval 113-163 (GNPQPYNDGQPQPAAPAPASAPAPAPSKLQNNSAPPPSMNRGTSKLFGGGS) is disordered. Positions 125–137 (PAAPAPASAPAPA) are enriched in pro residues. Residues 188–272 (WTVRARVTNK…VKNDYEMTFN (85 aa)) constitute a DNA-binding region (OB). The segment at 472-494 (CPSQDCNKKVIDQQNGLFRCEKC) adopts a C4-type zinc-finger fold.

Belongs to the replication factor A protein 1 family. Component of the heterotrimeric canonical replication protein A complex (RPA). Interacts with rpain-a.

It is found in the nucleus. The protein resides in the PML body. In terms of biological role, as part of the heterotrimeric replication protein A complex (RPA/RP-A), binds and stabilizes single-stranded DNA intermediates, that form during DNA replication or upon DNA stress. It prevents their reannealing and in parallel, recruits and activates different proteins and complexes involved in DNA metabolism. Thereby, it plays an essential role both in DNA replication and the cellular response to DNA damage. This Xenopus laevis (African clawed frog) protein is Replication protein A 70 kDa DNA-binding subunit (rpa1).